The following is a 115-amino-acid chain: Hydrogenase maturation factor HypA (115 aa).

His2 lines the Ni(2+) pocket. Zn(2+) is bound by residues Cys73, Cys76, Cys89, and Cys92.

Belongs to the HypA/HybF family.

Its function is as follows. Involved in the maturation of [NiFe] hydrogenases. Required for nickel insertion into the metal center of the hydrogenase. This Polaromonas naphthalenivorans (strain CJ2) protein is Hydrogenase maturation factor HypA.